The chain runs to 264 residues: 3-methyl-2-oxobutanoate hydroxymethyltransferase (264 aa).

The Mg(2+) site is built by D45 and D84. 3-methyl-2-oxobutanoate contacts are provided by residues 45–46 (DS), D84, and K112. E114 lines the Mg(2+) pocket. The active-site Proton acceptor is E181.

This sequence belongs to the PanB family. Homodecamer; pentamer of dimers. Requires Mg(2+) as cofactor.

It localises to the cytoplasm. It carries out the reaction 3-methyl-2-oxobutanoate + (6R)-5,10-methylene-5,6,7,8-tetrahydrofolate + H2O = 2-dehydropantoate + (6S)-5,6,7,8-tetrahydrofolate. It functions in the pathway cofactor biosynthesis; (R)-pantothenate biosynthesis; (R)-pantoate from 3-methyl-2-oxobutanoate: step 1/2. Catalyzes the reversible reaction in which hydroxymethyl group from 5,10-methylenetetrahydrofolate is transferred onto alpha-ketoisovalerate to form ketopantoate. This is 3-methyl-2-oxobutanoate hydroxymethyltransferase from Shewanella sediminis (strain HAW-EB3).